The chain runs to 468 residues: MMAAVDAILAGKYPAKAHARRVAESLQSYRNGCPGIVYLEAQKTRLIEDNDEPAPFRQRRPFFYLSGCPLPDSCLVYDLSEDQLTLFIPPVDPEDVIWSGLPMSTEEAQNQYDVDRVLVTTELNSTLASIVSSHGGKAIAFTIADQVSESTQFHGFSEVNHSVLKGVIEQSRVVKDEYEVALLRKANDISAKAHIAAIKASQTAVNEREIEGAFIATCIANGAREQSYHPIVACGENGATLHYGKNDDTLIDPVTNQKKRNVLIDAGGEYRTYCADITRVIPVGGKFTAETRQIYDIVLQMQTECIAMLKEGVQWEDVHAHAHRVAIRGLLKLGILRGAEDEIFEKRVSVAFFPHGLGHYLGMDTHDTGGNPNYADKDTMFRYLRVRGRLPAGSVITVEPGVYFCRFIIEPYIKSPESNKYIDTNVLDRYWRVGGVRIEDNVLVTKDGYDNLTTAPKAVDELERLAAS.

Mn(2+) contacts are provided by aspartate 265, aspartate 276, glutamate 399, and glutamate 439.

It belongs to the peptidase M24B family. The cofactor is Mn(2+).

It carries out the reaction Release of any N-terminal amino acid, including proline, that is linked to proline, even from a dipeptide or tripeptide.. In terms of biological role, catalyzes the removal of a penultimate prolyl residue from the N-termini of peptides. This chain is Probable Xaa-Pro aminopeptidase pepP (pepP), found in Aspergillus fumigatus (strain CBS 144.89 / FGSC A1163 / CEA10) (Neosartorya fumigata).